An 87-amino-acid polypeptide reads, in one-letter code: Protein Tat (87 aa).

The interval Met-1–Pro-21 is disordered. Positions Met-1 to Lys-24 are interaction with human CREBBP. The tract at residues Met-1–Gly-48 is transactivation. Residues Cys-22, Cys-25, and Cys-27 each contribute to the Zn(2+) site. A cysteine-rich region spans residues Cys-22–Cys-37. The residue at position 28 (Lys-28) is an N6-acetyllysine; by host PCAF. Cys-30, His-33, Cys-34, and Cys-37 together coordinate Zn(2+). Positions Phe-38–Gly-48 are core. The tract at residues Ile-45–Glu-87 is disordered. Residues Gly-48–Pro-58 show a composition bias toward basic residues. The Nuclear localization signal, RNA-binding (TAR), and protein transduction signature appears at Arg-49–Arg-57. The interaction with the host capping enzyme RNGTT stretch occupies residues Arg-49–Glu-87. An N6-acetyllysine; by host EP300 and GCN5L2 mark is found at Lys-50 and Lys-51. 2 positions are modified to asymmetric dimethylarginine; by host PRMT6: Arg-52 and Arg-53. Residues His-77–Glu-87 are compositionally biased toward basic and acidic residues. Residues Arg-78–Asp-80 carry the Cell attachment site motif.

The protein belongs to the lentiviruses Tat family. Interacts with host CCNT1. Associates with the P-TEFb complex composed at least of Tat, P-TEFb (CDK9 and CCNT1), TAR RNA, RNA Pol II. Recruits the HATs CREBBP, TAF1/TFIID, EP300, PCAF and GCN5L2. Interacts with host KAT5/Tip60; this interaction targets the latter to degradation. Interacts with the host deacetylase SIRT1. Interacts with host capping enzyme RNGTT; this interaction stimulates RNGTT. Binds to host KDR, and to the host integrins ITGAV/ITGB3 and ITGA5/ITGB1. Interacts with host KPNB1/importin beta-1 without previous binding to KPNA1/importin alpha-1. Interacts with EIF2AK2. Interacts with host nucleosome assembly protein NAP1L1; this interaction may be required for the transport of Tat within the nucleus, since the two proteins interact at the nuclear rim. Interacts with host C1QBP/SF2P32; this interaction involves lysine-acetylated Tat. Interacts with the host chemokine receptors CCR2, CCR3 and CXCR4. Interacts with host DPP4/CD26; this interaction may trigger an anti-proliferative effect. Interacts with host LDLR. Interacts with the host extracellular matrix metalloproteinase MMP1. Interacts with host PRMT6; this interaction mediates Tat's methylation. Interacts with, and is ubiquitinated by MDM2/Hdm2. Interacts with host PSMC3 and HTATIP2. Interacts with STAB1; this interaction may overcome SATB1-mediated repression of IL2 and IL2RA (interleukin) in T cells by binding to the same domain than HDAC1. Interacts (when acetylated) with human CDK13, thereby increasing HIV-1 mRNA splicing and promoting the production of the doubly spliced HIV-1 protein Nef. Interacts with host TBP; this interaction modulates the activity of transcriptional pre-initiation complex. Interacts with host RELA. Interacts with host PLSCR1; this interaction negatively regulates Tat transactivation activity by altering its subcellular distribution. Post-translationally, asymmetrical arginine methylation by host PRMT6 seems to diminish the transactivation capacity of Tat and affects the interaction with host CCNT1. Acetylation by EP300, CREBBP, GCN5L2/GCN5 and PCAF regulates the transactivation activity of Tat. EP300-mediated acetylation of Lys-50 promotes dissociation of Tat from the TAR RNA through the competitive binding to PCAF's bromodomain. In addition, the non-acetylated Tat's N-terminus can also interact with PCAF. PCAF-mediated acetylation of Lys-28 enhances Tat's binding to CCNT1. Lys-50 is deacetylated by SIRT1. In terms of processing, polyubiquitination by host MDM2 does not target Tat to degradation, but activates its transactivation function and fosters interaction with CCNT1 and TAR RNA. Post-translationally, phosphorylated by EIF2AK2 on serine and threonine residues adjacent to the basic region important for TAR RNA binding and function. Phosphorylation of Tat by EIF2AK2 is dependent on the prior activation of EIF2AK2 by dsRNA.

It is found in the host nucleus. The protein resides in the host nucleolus. The protein localises to the host cytoplasm. Its subcellular location is the secreted. Its function is as follows. Transcriptional activator that increases RNA Pol II processivity, thereby increasing the level of full-length viral transcripts. Recognizes a hairpin structure at the 5'-LTR of the nascent viral mRNAs referred to as the transactivation responsive RNA element (TAR) and recruits the cyclin T1-CDK9 complex (P-TEFb complex) that will in turn hyperphosphorylate the RNA polymerase II to allow efficient elongation. The CDK9 component of P-TEFb and other Tat-activated kinases hyperphosphorylate the C-terminus of RNA Pol II that becomes stabilized and much more processive. Other factors such as HTATSF1/Tat-SF1, SUPT5H/SPT5, and HTATIP2 are also important for Tat's function. Besides its effect on RNA Pol II processivity, Tat induces chromatin remodeling of proviral genes by recruiting the histone acetyltransferases (HATs) CREBBP, EP300 and PCAF to the chromatin. This also contributes to the increase in proviral transcription rate, especially when the provirus integrates in transcriptionally silent region of the host genome. To ensure maximal activation of the LTR, Tat mediates nuclear translocation of NF-kappa-B by interacting with host RELA. Through its interaction with host TBP, Tat may also modulate transcription initiation. Tat can reactivate a latently infected cell by penetrating in it and transactivating its LTR promoter. In the cytoplasm, Tat is thought to act as a translational activator of HIV-1 mRNAs. Functionally, extracellular circulating Tat can be endocytosed by surrounding uninfected cells via the binding to several surface receptors such as CD26, CXCR4, heparan sulfate proteoglycans (HSPG) or LDLR. Neurons are rarely infected, but they internalize Tat via their LDLR. Through its interaction with nuclear HATs, Tat is potentially able to control the acetylation-dependent cellular gene expression. Modulates the expression of many cellular genes involved in cell survival, proliferation or in coding for cytokines or cytokine receptors. Tat plays a role in T-cell and neurons apoptosis. Tat induced neurotoxicity and apoptosis probably contribute to neuroAIDS. Circulating Tat also acts as a chemokine-like and/or growth factor-like molecule that binds to specific receptors on the surface of the cells, affecting many cellular pathways. In the vascular system, Tat binds to ITGAV/ITGB3 and ITGA5/ITGB1 integrins dimers at the surface of endothelial cells and competes with bFGF for heparin-binding sites, leading to an excess of soluble bFGF. This Homo sapiens (Human) protein is Protein Tat.